Consider the following 422-residue polypeptide: UDP-N-acetylglucosamine 1-carboxyvinyltransferase (422 aa).

Position 22–23 (Lys-22–Asn-23) interacts with phosphoenolpyruvate. Residue Arg-94 participates in UDP-N-acetyl-alpha-D-glucosamine binding. Cys-118 acts as the Proton donor in catalysis. Position 118 is a 2-(S-cysteinyl)pyruvic acid O-phosphothioketal (Cys-118). UDP-N-acetyl-alpha-D-glucosamine is bound by residues Arg-123–Leu-127, Asp-309, and Ile-331.

The protein belongs to the EPSP synthase family. MurA subfamily.

It is found in the cytoplasm. It catalyses the reaction phosphoenolpyruvate + UDP-N-acetyl-alpha-D-glucosamine = UDP-N-acetyl-3-O-(1-carboxyvinyl)-alpha-D-glucosamine + phosphate. Its pathway is cell wall biogenesis; peptidoglycan biosynthesis. Functionally, cell wall formation. Adds enolpyruvyl to UDP-N-acetylglucosamine. The protein is UDP-N-acetylglucosamine 1-carboxyvinyltransferase of Cereibacter sphaeroides (strain KD131 / KCTC 12085) (Rhodobacter sphaeroides).